Here is a 182-residue protein sequence, read N- to C-terminus: Large ribosomal subunit protein uL6 (182 aa).

It belongs to the universal ribosomal protein uL6 family. Part of the 50S ribosomal subunit.

Functionally, this protein binds to the 23S rRNA, and is important in its secondary structure. It is located near the subunit interface in the base of the L7/L12 stalk, and near the tRNA binding site of the peptidyltransferase center. This chain is Large ribosomal subunit protein uL6, found in Aeropyrum pernix (strain ATCC 700893 / DSM 11879 / JCM 9820 / NBRC 100138 / K1).